The chain runs to 504 residues: Maturase K (504 aa).

It belongs to the intron maturase 2 family. MatK subfamily.

It localises to the plastid. It is found in the chloroplast. Functionally, usually encoded in the trnK tRNA gene intron. Probably assists in splicing its own and other chloroplast group II introns. The polypeptide is Maturase K (Impatiens capensis (Spotted jewelweed)).